Consider the following 46-residue polypeptide: Sperm protamine P1 (46 aa).

The protein belongs to the protamine P1 family. As to expression, testis.

It is found in the nucleus. It localises to the chromosome. Its function is as follows. Protamines substitute for histones in the chromatin of sperm during the haploid phase of spermatogenesis. They compact sperm DNA into a highly condensed, stable and inactive complex. The protein is Sperm protamine P1 (PRM1) of Glauconycteris beatrix (Beatrix's bat).